The following is a 197-amino-acid chain: Imidazoleglycerol-phosphate dehydratase (197 aa).

The protein belongs to the imidazoleglycerol-phosphate dehydratase family.

The protein resides in the cytoplasm. It catalyses the reaction D-erythro-1-(imidazol-4-yl)glycerol 3-phosphate = 3-(imidazol-4-yl)-2-oxopropyl phosphate + H2O. It functions in the pathway amino-acid biosynthesis; L-histidine biosynthesis; L-histidine from 5-phospho-alpha-D-ribose 1-diphosphate: step 6/9. This Rhodopseudomonas palustris (strain ATCC BAA-98 / CGA009) protein is Imidazoleglycerol-phosphate dehydratase.